Consider the following 372-residue polypeptide: Riboflavin biosynthesis protein RibD (372 aa).

In terms of domain architecture, CMP/dCMP-type deaminase spans 1-122 (MKDIFYMKKA…KWLKKHGILV (122 aa)). Positions 1-145 (MKDIFYMKKA…KGFFQRMTTG (145 aa)) are deaminase. His-50 contributes to the Zn(2+) binding site. Glu-52 acts as the Proton donor in catalysis. Zn(2+) is bound by residues Cys-75 and Cys-84. Residues 146-372 (IPWIKLKLAS…KLILTKHNSS (227 aa)) form a reductase region. Residue Ala-154 coordinates NADP(+). Ser-168 serves as a coordination point for substrate. Trp-170 lines the NADP(+) pocket. A substrate-binding site is contributed by Arg-184. NADP(+) contacts are provided by Thr-196 and Asp-200. Substrate contacts are provided by Leu-204 and Arg-207. Ser-236 lines the NADP(+) pocket. Glu-301 provides a ligand contact to substrate. Residue 303-309 (GPSLSSS) coordinates NADP(+).

It in the N-terminal section; belongs to the cytidine and deoxycytidylate deaminase family. In the C-terminal section; belongs to the HTP reductase family. Zn(2+) is required as a cofactor.

It carries out the reaction 2,5-diamino-6-hydroxy-4-(5-phosphoribosylamino)-pyrimidine + H2O + H(+) = 5-amino-6-(5-phospho-D-ribosylamino)uracil + NH4(+). The enzyme catalyses 5-amino-6-(5-phospho-D-ribitylamino)uracil + NADP(+) = 5-amino-6-(5-phospho-D-ribosylamino)uracil + NADPH + H(+). The protein operates within cofactor biosynthesis; riboflavin biosynthesis; 5-amino-6-(D-ribitylamino)uracil from GTP: step 2/4. It participates in cofactor biosynthesis; riboflavin biosynthesis; 5-amino-6-(D-ribitylamino)uracil from GTP: step 3/4. Converts 2,5-diamino-6-(ribosylamino)-4(3h)-pyrimidinone 5'-phosphate into 5-amino-6-(ribosylamino)-2,4(1h,3h)-pyrimidinedione 5'-phosphate. The protein is Riboflavin biosynthesis protein RibD (ribD) of Buchnera aphidicola subsp. Baizongia pistaciae (strain Bp).